Consider the following 464-residue polypeptide: Glutamate--tRNA ligase (464 aa).

The 'HIGH' region signature appears at 11 to 21; sequence PSPTGFIHLGN. The 'KMSKS' region signature appears at 243–247; it reads KMSKR. Residue Lys246 coordinates ATP.

It belongs to the class-I aminoacyl-tRNA synthetase family. Glutamate--tRNA ligase type 1 subfamily. Monomer.

Its subcellular location is the cytoplasm. The catalysed reaction is tRNA(Glu) + L-glutamate + ATP = L-glutamyl-tRNA(Glu) + AMP + diphosphate. Functionally, catalyzes the attachment of glutamate to tRNA(Glu) in a two-step reaction: glutamate is first activated by ATP to form Glu-AMP and then transferred to the acceptor end of tRNA(Glu). This Polaromonas naphthalenivorans (strain CJ2) protein is Glutamate--tRNA ligase.